We begin with the raw amino-acid sequence, 1416 residues long: 1-phosphatidylinositol 4,5-bisphosphate phosphodiesterase eta-2 (1416 aa).

Positions 1-155 (MSGPWPSPDS…WVTGLRYLMA (155 aa)) are necessary for plasma membrane localization. Residues 47–155 (GAMQEGMQMV…WVTGLRYLMA (109 aa)) form the PH domain. 2 consecutive EF-hand domains span residues 169 to 204 (TRDQ…LNVN) and 205 to 241 (LPRQ…MSTR). Ca(2+)-binding residues include Asp182, Asn184, Asp186, Ser188, and Glu193. The PI-PLC X-box domain maps to 326-471 (QDMTQPLSHY…LKGKILVKGK (146 aa)). Residue His341 is part of the active site. Positions 342, 371, and 373 each coordinate Ca(2+). His385 is a catalytic residue. Glu420 lines the Ca(2+) pocket. Substrate is bound by residues Lys469 and Lys471. Phosphoserine is present on residues Ser487 and Ser491. The interval 535 to 620 (DPNNFSVSTL…RGATRQKKTM (86 aa)) is disordered. A compositionally biased stretch (polar residues) spans 537 to 546 (NNFSVSTLSP). A compositionally biased stretch (basic residues) spans 581-592 (SRRKKKGSKLKK). A phosphoserine mark is found at Ser595 and Ser605. The 115-residue stretch at 626–740 (LSDLVKYTKS…GYVLKPGCMC (115 aa)) folds into the PI-PLC Y-box domain. The substrate site is built by Ser653 and Arg680. The 130-residue stretch at 740-869 (CQGVFNPNSE…PGYRHVYLEG (130 aa)) folds into the C2 domain. 6 residues coordinate Ca(2+): Ile784, Asp786, Asp810, Asp839, His840, and Asp841. 3 disordered regions span residues 905-1109 (GSLD…GGWR), 1121-1222 (YSDA…LQPR), and 1315-1405 (ITSP…GPAS). The span at 1011–1021 (APGPGPPPPAA) shows a compositional bias: pro residues. Residues 1073-1083 (GSQTDGRSQPR) are compositionally biased toward polar residues. The segment covering 1143–1166 (VSSSSSMSSSDTVIDLSLPSLGLG) has biased composition (low complexity). Over residues 1199–1208 (KSKSNPNLRA) the composition is skewed to polar residues. The segment covering 1324 to 1333 (AGEGVAGGPG) has biased composition (gly residues).

Ca(2+) is required as a cofactor. As to expression, expressed in retina and kidney.

It localises to the cytoplasm. The protein resides in the cell membrane. The enzyme catalyses a 1,2-diacyl-sn-glycero-3-phospho-(1D-myo-inositol-4,5-bisphosphate) + H2O = 1D-myo-inositol 1,4,5-trisphosphate + a 1,2-diacyl-sn-glycerol + H(+). Its activity is regulated as follows. Activity is stimulated by GNB1:GNG2. In terms of biological role, the production of the second messenger molecules diacylglycerol (DAG) and inositol 1,4,5-trisphosphate (IP3) is mediated by activated phosphatidylinositol-specific phospholipase C enzymes. This phospholipase activity is very sensitive to calcium. May be important for formation and maintenance of the neuronal network in the postnatal brain. The polypeptide is 1-phosphatidylinositol 4,5-bisphosphate phosphodiesterase eta-2 (Homo sapiens (Human)).